The chain runs to 163 residues: D-aminoacyl-tRNA deacylase (163 aa).

The short motif at 141 to 142 (GP) is the Gly-cisPro motif, important for rejection of L-amino acids element.

It belongs to the DTD family. As to quaternary structure, homodimer.

It is found in the cytoplasm. It carries out the reaction glycyl-tRNA(Ala) + H2O = tRNA(Ala) + glycine + H(+). It catalyses the reaction a D-aminoacyl-tRNA + H2O = a tRNA + a D-alpha-amino acid + H(+). Functionally, an aminoacyl-tRNA editing enzyme that deacylates mischarged D-aminoacyl-tRNAs. Also deacylates mischarged glycyl-tRNA(Ala), protecting cells against glycine mischarging by AlaRS. Acts via tRNA-based rather than protein-based catalysis; rejects L-amino acids rather than detecting D-amino acids in the active site. By recycling D-aminoacyl-tRNA to D-amino acids and free tRNA molecules, this enzyme counteracts the toxicity associated with the formation of D-aminoacyl-tRNA entities in vivo and helps enforce protein L-homochirality. The polypeptide is D-aminoacyl-tRNA deacylase (Neisseria gonorrhoeae (strain ATCC 700825 / FA 1090)).